A 366-amino-acid chain; its full sequence is Methylthioribose-1-phosphate isomerase (366 aa).

Substrate-binding positions include 53–55 (RGA), R90, and Q203. D244 serves as the catalytic Proton donor. Substrate is bound at residue 254 to 255 (NK).

Belongs to the eIF-2B alpha/beta/delta subunits family. MtnA subfamily.

It catalyses the reaction 5-(methylsulfanyl)-alpha-D-ribose 1-phosphate = 5-(methylsulfanyl)-D-ribulose 1-phosphate. The protein operates within amino-acid biosynthesis; L-methionine biosynthesis via salvage pathway; L-methionine from S-methyl-5-thio-alpha-D-ribose 1-phosphate: step 1/6. Functionally, catalyzes the interconversion of methylthioribose-1-phosphate (MTR-1-P) into methylthioribulose-1-phosphate (MTRu-1-P). The sequence is that of Methylthioribose-1-phosphate isomerase from Methylocella silvestris (strain DSM 15510 / CIP 108128 / LMG 27833 / NCIMB 13906 / BL2).